The primary structure comprises 116 residues: Large ribosomal subunit protein bL17 (116 aa).

Belongs to the bacterial ribosomal protein bL17 family. As to quaternary structure, part of the 50S ribosomal subunit. Contacts protein L32.

The polypeptide is Large ribosomal subunit protein bL17 (Microcystis aeruginosa (strain NIES-843 / IAM M-2473)).